We begin with the raw amino-acid sequence, 308 residues long: Zinc finger protein unc-98 (308 aa).

2 C2H2-type zinc fingers span residues 111-133 (YKCR…ERIH) and 139-161 (YVCG…AAQH). The C2H2-type 3; degenerate zinc finger occupies 166-186 (GFKCDCGRTFFSYTEMLYHKH). The segment at 244–266 (YICEYCSKSYSDSRGLAYHMYSH) adopts a C2H2-type 4 zinc-finger fold.

Its subcellular location is the nucleus. It is found in the cytoplasm. Functionally, probable transcription factor. Required for muscle structure. Its dual subcellular localization suggests that it may function both as a muscle adhesion complex protein and as a transcription factor, or work together with transcription factors, to influence gene expression. Thought to act as a molecular bridge between unc-97 and mhc-a at the M-line of muscles, possibly in a signaling role. The chain is Zinc finger protein unc-98 from Caenorhabditis briggsae.